The sequence spans 1176 residues: Leucine--tRNA ligase, cytoplasmic (1176 aa).

L-leucine contacts are provided by Y52 and Y54. Residues H60–H63 carry the 'HIGH' region motif. Residues P115–G142 form a disordered region. Residues F117–E126 show a composition bias toward acidic residues. Residues T127–K139 are compositionally biased toward basic and acidic residues. A Phosphoserine modification is found at S167. The tract at residues G260 to E509 is editing domain. L-leucine-binding residues include L594 and S597. A 'KMSKS' region motif is present at residues K716–S720. Residue K719 participates in ATP binding. S720 bears the Phosphoserine mark. An N6-acetyllysine mark is found at K970 and K1047.

This sequence belongs to the class-I aminoacyl-tRNA synthetase family.

Its subcellular location is the cytoplasm. It carries out the reaction tRNA(Leu) + L-leucine + ATP = L-leucyl-tRNA(Leu) + AMP + diphosphate. The catalysed reaction is L-methionyl-tRNA(Leu) + H2O = tRNA(Leu) + L-methionine + H(+). With respect to regulation, 5-fluoro-1,3-dihydro-1-hydroxy-1,2-benzoxaborole inhibits LARS1 by forming a covalent adduct with the 3' adenosine of tRNA(Leu) at the editing site, thus locking the enzyme in an inactive conformation. Functionally, aminoacyl-tRNA synthetase that catalyzes the specific attachment of leucine to its cognate tRNA (tRNA(Leu)). It performs tRNA aminoacylation in a two-step reaction: Leu is initially activated by ATP to form a leucyl-adenylate (Leu-AMP) intermediate; then the leucyl moiety is transferred to the acceptor 3' end of the tRNA to yield leucyl-tRNA. To improve the fidelity of catalytic reactions, it is also able to hydrolyze misactivated aminoacyl-adenylate intermediates (pre-transfer editing) and mischarged aminoacyl-tRNAs (post-transfer editing). In Pongo abelii (Sumatran orangutan), this protein is Leucine--tRNA ligase, cytoplasmic (LARS1).